A 401-amino-acid polypeptide reads, in one-letter code: Mu-type opioid receptor (401 aa).

Residues 1–69 lie on the Extracellular side of the membrane; the sequence is MDSGAVPTNA…CPSAGSPSMI (69 aa). N-linked (GlcNAc...) asparagine glycosylation is found at Asn-9, Asn-12, Asn-34, Asn-41, and Asn-49. Residues 70–94 form a helical membrane-spanning segment; it reads TAIIIMALYSIVCVVGLFGNFLVMY. Residues 95-107 are Cytoplasmic-facing; sequence VIVRYTKMKTATN. A helical membrane pass occupies residues 108–132; it reads IYIFNLALADALATSTLPFQSVNYL. At 133–143 the chain is on the extracellular side; that stretch reads MGTWPFGTILC. Residues Cys-143 and Cys-220 are joined by a disulfide bond. A helical membrane pass occupies residues 144–166; that stretch reads KIVISIDYYNMFTSIFTLCTMSV. Over 167–186 the chain is Cytoplasmic; the sequence is DRYIAVCHPVKALDLRTPRN. Phosphotyrosine is present on Tyr-169. The chain crosses the membrane as a helical span at residues 187–208; that stretch reads AKIINICNWILSSAIGLPVMFM. The Extracellular portion of the chain corresponds to 209–231; it reads ATTKYRQGSIDCTLTFSHPTWYW. Residues 232–256 traverse the membrane as a helical segment; the sequence is ENLLKICVFIFAFIMPILIITVCYG. The Cytoplasmic portion of the chain corresponds to 257–280; it reads LMILRLKSVRMLSGSKEKDRNLRR. Residues 281–307 form a helical membrane-spanning segment; sequence ITRMVLVVVAVFIVCWTPIHIYVIIKA. Over 308–315 the chain is Extracellular; the sequence is LITIPETT. Residues 316 to 339 form a helical membrane-spanning segment; the sequence is FQTVSWHFCIALGYTNSCLNPVLY. The NPxxY; plays a role in stabilizing the activated conformation of the receptor motif lies at 335 to 339; it reads NPVLY. The Cytoplasmic portion of the chain corresponds to 340–401; the sequence is AFLDENFKRC…NLEAETTPLP (62 aa). Cys-354 is lipidated: S-palmitoyl cysteine. Residues 365–389 are disordered; it reads NSTRIRQNTRDHPSTANTVDRTNHQ. Ser-366 is subject to Phosphoserine. Residue Thr-373 is modified to Phosphothreonine. Ser-378 is subject to Phosphoserine. A Phosphothreonine modification is found at Thr-397.

Belongs to the G-protein coupled receptor 1 family. Forms homooligomers and heterooligomers with other GPCRs, such as OPRD1, OPRK1, OPRL1, NPFFR2, ADRA2A, SSTR2, CNR1 and CCR5 (probably in dimeric forms). Interacts with heterotrimeric G proteins; interaction with a heterotrimeric complex containing GNAI1, GNB1 and GNG2 stabilizes the active conformation of the receptor and increases its affinity for endomorphin-2, the synthetic opioid peptide DAMGO and for morphinan agonists. Interacts with PPL; the interaction disrupts agonist-mediated G-protein activation. Interacts (via C-terminus) with DNAJB4 (via C-terminus). Interacts with calmodulin; the interaction inhibits the constitutive activity of OPRM1; it abolishes basal and attenuates agonist-stimulated G-protein coupling. Interacts with FLNA, PLD2, RANBP9 and WLS and GPM6A. Interacts with RTP4. Interacts with SYP and GNAS. Interacts with RGS9, RGS17, RGS20, RGS4, PPP1R9B and HINT1. In terms of processing, phosphorylated. Differentially phosphorylated in basal and agonist-induced conditions. Agonist-mediated phosphorylation modulates receptor internalization. Phosphorylated by GRK2 in a agonist-dependent manner. Phosphorylation at Tyr-169 requires receptor activation, is dependent on non-receptor protein tyrosine kinase Src and results in a decrease in agonist efficacy by reducing G-protein coupling efficiency. Phosphorylated on tyrosine residues; the phosphorylation is involved in agonist-induced G-protein-independent receptor down-regulation. Phosphorylation at Ser-378 is involved in G-protein-dependent but not beta-arrestin-dependent activation of the ERK pathway. Ubiquitinated. A basal ubiquitination seems not to be related to degradation. Ubiquitination is increased upon formation of OPRM1:OPRD1 oligomers leading to proteasomal degradation; the ubiquitination is diminished by RTP4.

Its subcellular location is the cell membrane. It is found in the cell projection. The protein localises to the axon. The protein resides in the perikaryon. It localises to the dendrite. Its subcellular location is the endosome. Its function is as follows. Receptor for endogenous opioids such as beta-endorphin and endomorphin. Receptor for natural and synthetic opioids including morphine, heroin, DAMGO, fentanyl, etorphine, buprenorphin and methadone. Also activated by enkephalin peptides, such as Met-enkephalin or Met-enkephalin-Arg-Phe, with higher affinity for Met-enkephalin-Arg-Phe. Agonist binding to the receptor induces coupling to an inactive GDP-bound heterotrimeric G-protein complex and subsequent exchange of GDP for GTP in the G-protein alpha subunit leading to dissociation of the G-protein complex with the free GTP-bound G-protein alpha and the G-protein beta-gamma dimer activating downstream cellular effectors. The agonist- and cell type-specific activity is predominantly coupled to pertussis toxin-sensitive G(i) and G(o) G alpha proteins, GNAI1, GNAI2, GNAI3 and GNAO1, and to a lesser extent to pertussis toxin-insensitive G alpha proteins GNAZ and GNA15. They mediate an array of downstream cellular responses, including inhibition of adenylate cyclase activity and both N-type and L-type calcium channels, activation of inward rectifying potassium channels, mitogen-activated protein kinase (MAPK), phospholipase C (PLC), phosphoinositide/protein kinase (PKC), phosphoinositide 3-kinase (PI3K) and regulation of NF-kappa-B. Also couples to adenylate cyclase stimulatory G alpha proteins. The selective temporal coupling to G-proteins and subsequent signaling can be regulated by RGSZ proteins, such as RGS9, RGS17 and RGS4. Phosphorylation by members of the GPRK subfamily of Ser/Thr protein kinases and association with beta-arrestins is involved in short-term receptor desensitization. Beta-arrestins associate with the GPRK-phosphorylated receptor and uncouple it from the G-protein thus terminating signal transduction. The phosphorylated receptor is internalized through endocytosis via clathrin-coated pits which involves beta-arrestins. The activation of the ERK pathway occurs either in a G-protein-dependent or a beta-arrestin-dependent manner and is regulated by agonist-specific receptor phosphorylation. Acts as a class A G-protein coupled receptor (GPCR) which dissociates from beta-arrestin at or near the plasma membrane and undergoes rapid recycling. Receptor down-regulation pathways are varying with the agonist and occur dependent or independent of G-protein coupling. Endogenous ligands induce rapid desensitization, endocytosis and recycling. Heterooligomerization with other GPCRs can modulate agonist binding, signaling and trafficking properties. Involved in neurogenesis. The sequence is that of Mu-type opioid receptor (OPRM1) from Bos taurus (Bovine).